Reading from the N-terminus, the 346-residue chain is Probable long-chain-alcohol O-fatty-acyltransferase 6 (346 aa).

The next 8 membrane-spanning stretches (helical) occupy residues 7–27 (LFIQVWVSAIISVTYCYYLTP), 36–56 (LLSVLPVCVLFLIIPIFFSTV), 59–79 (SFTIAFFLSGLAVPKLILFAL), 116–136 (FPKWVFALKVFIFGALLLQAY), 146–166 (FLLGLYALHIYLELEISLTLI), 228–248 (FFAIFATFLVSGVAHEILYFY), 255–275 (TWEVTWFFVLHGFCMAAEVAL), and 289–309 (PAVSRLLTVGFVFVTGVWLFS).

This sequence belongs to the wax synthase family.

The protein localises to the membrane. The enzyme catalyses a long chain fatty alcohol + a fatty acyl-CoA = a wax ester + CoA. Catalyzes the final step in the synthesis of long-chain linear esters (waxes). This Arabidopsis thaliana (Mouse-ear cress) protein is Probable long-chain-alcohol O-fatty-acyltransferase 6 (AT6).